Consider the following 800-residue polypeptide: Mitogen-activated protein kinase kinase kinase 20 (800 aa).

An N-acetylserine modification is found at Ser2. Ser2, Ser3, and Ser7 each carry phosphoserine; by autocatalysis. In terms of domain architecture, Protein kinase spans Leu16 to Leu277. ATP is bound by residues Cys22–Val30 and Lys45. Catalysis depends on Asp133, which acts as the Proton acceptor. Thr161 is modified (phosphothreonine; by autocatalysis). Position 165 is a phosphoserine; by autocatalysis (Ser165). Position 275 is a phosphoserine (Ser275). The interval Ile287–Leu308 is leucine-zipper. Ser302 is subject to Phosphoserine; by autocatalysis. Trp339, Glu429, Lys434, Asp454, and Ser567 each carry phosphoserine. The SAM domain maps to Trp339 to Asp410. Thr586 is modified (phosphothreonine; by autocatalysis). Ser587 carries the phosphoserine; by autocatalysis modification. Ser593 and Ser599 each carry phosphoserine. The residue at position 628 (Thr628) is a Phosphothreonine. Phosphoserine occurs at positions 633, 637, and 648. Phosphoserine; by autocatalysis is present on residues Ser649 and Ser660. Positions Leu652–Thr666 are enriched in polar residues. The segment at Leu652–Phe800 is disordered. Thr664 bears the Phosphothreonine; by autocatalysis mark. Basic and acidic residues predominate over residues Ser667–Arg678. The sensing domain (S) stretch occupies residues Arg670–Lys713. The residue at position 685 (Ser685) is a Phosphoserine. 2 stretches are compositionally biased toward polar residues: residues Ile686–Ser706 and Val717–Gln726. Phosphoserine; by autocatalysis occurs at positions 718 and 720. Phosphoserine is present on residues Ser727 and Ser733. Residues Pro728–His738 are compositionally biased toward basic and acidic residues. Thr742 bears the Phosphothreonine; by autocatalysis mark. 2 stretches are compositionally biased toward basic and acidic residues: residues Pro750 to Val763 and Thr785 to Phe800. The segment at Arg774–Phe800 is C-terminal domain (CTD).

The protein belongs to the protein kinase superfamily. STE Ser/Thr protein kinase family. MAP kinase kinase kinase subfamily. Homodimer. Interacts with ZNF33A. Component of a signaling complex containing at least AKAP13, PKN1, MAPK14, MAP3K20 and MAP2K3. Within this complex, AKAP13 interacts directly with PKN1, which in turn recruits MAPK14, MAP2K3 and MAP3K20. Interacts with EIF2AK4/GCN2; promoting EIF2AK4/GCN2 kinase activity. In terms of assembly, interacts with isoform ZAKbeta. As to quaternary structure, interacts with isoform ZAKalpha. The cofactor is Mg(2+). Activated by phosphorylation by PKN1, followed by autophosphorylation on Thr-161 and Ser-165. Autophosphorylation in response to ribotoxic stress promotes dissociation from colliding ribosomes and activation. As to expression, ubiquitously expressed. Isoform ZAKbeta is the predominant form in all tissues examined, except for liver, in which isoform ZAKalpha is more highly expressed.

It is found in the cytoplasm. It localises to the nucleus. The enzyme catalyses L-seryl-[protein] + ATP = O-phospho-L-seryl-[protein] + ADP + H(+). It carries out the reaction L-threonyl-[protein] + ATP = O-phospho-L-threonyl-[protein] + ADP + H(+). With respect to regulation, activated in response to stress, such as ribosomal stress, osmotic shock and ionizing radiation. Activated by phosphorylation by PKN1, followed by autophosphorylation on Thr-161 and Ser-165. Inhibited by nilotinib, sorafenib, dabrafenib, rebastinib and vemurafenib. Selectively inhibited by N-(3)-((1H-Pyrazolo[3,4-b]pyridin-5-yl)ethynyl)benzenesulfonamide compound 3h. Selectively inhibited by 1,2,3-triazole benzenesulfonamides. In terms of biological role, stress-activated component of a protein kinase signal transduction cascade that promotes programmed cell death in response to various stress, such as ribosomal stress, osmotic shock and ionizing radiation. Acts by catalyzing phosphorylation of MAP kinase kinases, leading to activation of the JNK (MAPK8/JNK1, MAPK9/JNK2 and/or MAPK10/JNK3) and MAP kinase p38 (MAPK11, MAPK12, MAPK13 and/or MAPK14) pathways. Activates JNK through phosphorylation of MAP2K4/MKK4 and MAP2K7/MKK7, and MAP kinase p38 gamma (MAPK12) via phosphorylation of MAP2K3/MKK3 and MAP2K6/MKK6. Involved in stress associated with adrenergic stimulation: contributes to cardiac decompensation during periods of acute cardiac stress. May be involved in regulation of S and G2 cell cycle checkpoint by mediating phosphorylation of CHEK2. Its function is as follows. Key component of the stress-activated protein kinase signaling cascade in response to ribotoxic stress or UV-B irradiation. Acts as the proximal sensor of ribosome collisions during the ribotoxic stress response (RSR): directly binds to the ribosome by inserting its flexible C-terminus into the ribosomal intersubunit space, thereby acting as a sentinel for colliding ribosomes. Upon ribosome collisions, activates either the stress-activated protein kinase signal transduction cascade or the integrated stress response (ISR), leading to programmed cell death or cell survival, respectively. Dangerous levels of ribosome collisions trigger the autophosphorylation and activation of MAP3K20, which dissociates from colliding ribosomes and phosphorylates MAP kinase kinases, leading to activation of the JNK and MAP kinase p38 pathways that promote programmed cell death. Less dangerous levels of ribosome collisions trigger the integrated stress response (ISR): MAP3K20 activates EIF2AK4/GCN2 independently of its protein-kinase activity, promoting EIF2AK4/GCN2-mediated phosphorylation of EIF2S1/eIF-2-alpha. Also part of the stress-activated protein kinase signaling cascade triggering the NLRP1 inflammasome in response to UV-B irradiation: ribosome collisions activate MAP3K20, which directly phosphorylates NLRP1, leading to activation of the NLRP1 inflammasome and subsequent pyroptosis. NLRP1 is also phosphorylated by MAP kinase p38 downstream of MAP3K20. Also acts as a histone kinase by phosphorylating histone H3 at 'Ser-28' (H3S28ph). Isoform that lacks the C-terminal region that mediates ribosome-binding: does not act as a sensor of ribosome collisions in response to ribotoxic stress. May act as an antagonist of isoform ZAKalpha: interacts with isoform ZAKalpha, leading to decrease the expression of isoform ZAKalpha. This is Mitogen-activated protein kinase kinase kinase 20 from Homo sapiens (Human).